The chain runs to 452 residues: uncharacterized protein (452 aa).

Residue 72-79 participates in ATP binding; it reads GPPGSGKT.

It belongs to the AAA ATPase family. RarA/MGS1/WRNIP1 subfamily.

This is an uncharacterized protein from Mycobacterium tuberculosis (strain ATCC 25618 / H37Rv).